Here is a 184-residue protein sequence, read N- to C-terminus: Chaperone protein YcdY (184 aa).

It belongs to the TorD/DmsD family. Interacts with YcdX.

Functionally, acts as a chaperone that increases YcdX activity, maybe by facilitating the correct insertion of the zinc ions into the catalytic site of YcdX. Involved in the swarming motility process. The sequence is that of Chaperone protein YcdY (ycdY) from Escherichia coli (strain K12).